The chain runs to 60 residues: Alpha-conotoxin-like 289 (60 aa).

The signal sequence occupies residues 1 to 16 (MFTVFLLVVLATTVVS). A propeptide spanning residues 17–42 (FTSDRAFRGRNAAAKASGLVGLTDKR) is cleaved from the precursor. A Pyrrolidone carboxylic acid modification is found at Gln-43. 2 disulfide bridges follow: Cys-45/Cys-51 and Cys-46/Cys-59. Residues 47 to 49 (SYP) are ser-Xaa-Pro motif, crucial for potent interaction with nAChR. Cys-59 carries the cysteine amide modification.

It belongs to the conotoxin A superfamily. As to expression, expressed by the venom duct.

It localises to the secreted. In terms of biological role, alpha-conotoxins act on postsynaptic membranes, they bind to the nicotinic acetylcholine receptors (nAChR) and thus inhibit them. The chain is Alpha-conotoxin-like 289 from Conus ammiralis (Admiral cone).